The sequence spans 124 residues: UPF0231 protein Shewmr4_0656 (124 aa).

It belongs to the UPF0231 family.

This chain is UPF0231 protein Shewmr4_0656, found in Shewanella sp. (strain MR-4).